Consider the following 413-residue polypeptide: Gamma-glutamyl phosphate reductase (413 aa).

The protein belongs to the gamma-glutamyl phosphate reductase family.

It localises to the cytoplasm. It carries out the reaction L-glutamate 5-semialdehyde + phosphate + NADP(+) = L-glutamyl 5-phosphate + NADPH + H(+). It participates in amino-acid biosynthesis; L-proline biosynthesis; L-glutamate 5-semialdehyde from L-glutamate: step 2/2. In terms of biological role, catalyzes the NADPH-dependent reduction of L-glutamate 5-phosphate into L-glutamate 5-semialdehyde and phosphate. The product spontaneously undergoes cyclization to form 1-pyrroline-5-carboxylate. This Rhodococcus jostii (strain RHA1) protein is Gamma-glutamyl phosphate reductase.